We begin with the raw amino-acid sequence, 169 residues long: Large ribosomal subunit protein uL10 (169 aa).

The protein belongs to the universal ribosomal protein uL10 family. In terms of assembly, part of the ribosomal stalk of the 50S ribosomal subunit. The N-terminus interacts with L11 and the large rRNA to form the base of the stalk. The C-terminus forms an elongated spine to which L12 dimers bind in a sequential fashion forming a multimeric L10(L12)X complex.

Functionally, forms part of the ribosomal stalk, playing a central role in the interaction of the ribosome with GTP-bound translation factors. This is Large ribosomal subunit protein uL10 from Rickettsia rickettsii (strain Iowa).